A 289-amino-acid chain; its full sequence is Protease HtpX homolog (289 aa).

2 helical membrane-spanning segments follow: residues 8–28 (LALLAALSGLLIAISYWVIGG) and 29–49 (SSGLMIGIGLAAVTNLLSWYQ). His-132 provides a ligand contact to Zn(2+). The active site involves Glu-133. His-136 contacts Zn(2+). A run of 2 helical transmembrane segments spans residues 151–171 (VAGAISFLAQMVSYSLWFGGI) and 183–203 (LGVLLTVVLAPIAATIIQLAI). Glu-208 contacts Zn(2+).

Belongs to the peptidase M48B family. The cofactor is Zn(2+).

The protein localises to the cell inner membrane. In Nostoc sp. (strain PCC 7120 / SAG 25.82 / UTEX 2576), this protein is Protease HtpX homolog.